A 120-amino-acid polypeptide reads, in one-letter code: uncharacterized protein (120 aa).

The helical transmembrane segment at 8 to 28 (LIVKWFVGLMLIMMMVAVSLF) threads the bilayer.

It localises to the membrane. This is an uncharacterized protein from Bacillus anthracis.